We begin with the raw amino-acid sequence, 473 residues long: Glutamate--tRNA ligase 2 (473 aa).

The 'HIGH' region motif lies at 11-21; sequence PSPTGYLHIGG. The span at 113 to 133 shows a compositional bias: basic and acidic residues; it reads KARAEGRPPRYDGRWRDRDPS. The interval 113 to 136 is disordered; that stretch reads KARAEGRPPRYDGRWRDRDPSEAP. The short motif at 240–244 is the 'KMSKS' region element; the sequence is KLSKR. ATP is bound at residue Lys243.

This sequence belongs to the class-I aminoacyl-tRNA synthetase family. Glutamate--tRNA ligase type 1 subfamily. As to quaternary structure, monomer.

It is found in the cytoplasm. The catalysed reaction is tRNA(Glu) + L-glutamate + ATP = L-glutamyl-tRNA(Glu) + AMP + diphosphate. Functionally, catalyzes the attachment of glutamate to tRNA(Glu) in a two-step reaction: glutamate is first activated by ATP to form Glu-AMP and then transferred to the acceptor end of tRNA(Glu). This is Glutamate--tRNA ligase 2 from Brucella suis biovar 1 (strain 1330).